Here is a 430-residue protein sequence, read N- to C-terminus: Adenylosuccinate synthetase (430 aa).

Residues 12 to 18 and 40 to 42 contribute to the GTP site; these read GDEGKGK and GHT. Asp-13 (proton acceptor) is an active-site residue. Residues Asp-13 and Gly-40 each coordinate Mg(2+). IMP is bound by residues 13–16, 38–41, Thr-129, Arg-143, Gln-224, Thr-239, and Arg-303; these read DEGK and NAGH. The active-site Proton donor is the His-41. 299–305 serves as a coordination point for substrate; it reads TVSNRER. Residues Arg-305, 331 to 333, and 413 to 415 each bind GTP; these read KLD and STG.

Belongs to the adenylosuccinate synthetase family. Homodimer. It depends on Mg(2+) as a cofactor.

The protein resides in the cytoplasm. It carries out the reaction IMP + L-aspartate + GTP = N(6)-(1,2-dicarboxyethyl)-AMP + GDP + phosphate + 2 H(+). It participates in purine metabolism; AMP biosynthesis via de novo pathway; AMP from IMP: step 1/2. Functionally, plays an important role in the de novo pathway of purine nucleotide biosynthesis. Catalyzes the first committed step in the biosynthesis of AMP from IMP. In Ehrlichia ruminantium (strain Gardel), this protein is Adenylosuccinate synthetase.